The primary structure comprises 249 residues: Type III pantothenate kinase (249 aa).

ATP is bound at residue 6–13 (DCGNSLIK). Substrate contacts are provided by residues Y93 and 100 to 103 (GLDR). Residue D102 is the Proton acceptor of the active site. D122 lines the K(+) pocket. T125 serves as a coordination point for ATP. Substrate is bound at residue T181.

The protein belongs to the type III pantothenate kinase family. In terms of assembly, homodimer. The cofactor is NH4(+). It depends on K(+) as a cofactor.

It is found in the cytoplasm. It carries out the reaction (R)-pantothenate + ATP = (R)-4'-phosphopantothenate + ADP + H(+). It participates in cofactor biosynthesis; coenzyme A biosynthesis; CoA from (R)-pantothenate: step 1/5. Catalyzes the phosphorylation of pantothenate (Pan), the first step in CoA biosynthesis. The chain is Type III pantothenate kinase from Pseudomonas paraeruginosa (strain DSM 24068 / PA7) (Pseudomonas aeruginosa (strain PA7)).